The primary structure comprises 2359 residues: Pre-mRNA-processing-splicing factor 8B (2359 aa).

Residues 1-50 (MWNIDGTSLAPPGTDGSRMQTPSHPADHPSYTAPSNRNTPTVPTPEDAEA) form a disordered region. The span at 32–41 (TAPSNRNTPT) shows a compositional bias: polar residues. The MPN domain maps to 2129–2260 (TYIMPKNILK…LTSYKLTQAG (132 aa)).

The protein localises to the nucleus. Functions as a scaffold that mediates the ordered assembly of spliceosomal proteins and snRNAs. Required for the assembly of the U4/U6-U5 tri-snRNP complex. The polypeptide is Pre-mRNA-processing-splicing factor 8B (Arabidopsis thaliana (Mouse-ear cress)).